The sequence spans 344 residues: Methionine import ATP-binding protein MetN (344 aa).

An ABC transporter domain is found at 2-241 (LELKQVGKVY…PQAEVTKAFV (240 aa)). An ATP-binding site is contributed by 38–45 (GYSGAGKS).

The protein belongs to the ABC transporter superfamily. Methionine importer (TC 3.A.1.24) family. As to quaternary structure, the complex is composed of two ATP-binding proteins (MetN), two transmembrane proteins (MetI) and a solute-binding protein (MetQ).

It is found in the cell membrane. The catalysed reaction is L-methionine(out) + ATP + H2O = L-methionine(in) + ADP + phosphate + H(+). The enzyme catalyses D-methionine(out) + ATP + H2O = D-methionine(in) + ADP + phosphate + H(+). In terms of biological role, part of the ABC transporter complex MetNIQ involved in methionine import. Responsible for energy coupling to the transport system. The sequence is that of Methionine import ATP-binding protein MetN from Latilactobacillus sakei subsp. sakei (strain 23K) (Lactobacillus sakei subsp. sakei).